The primary structure comprises 116 residues: Fluoride-specific ion channel FluC 1 (116 aa).

A run of 4 helical transmembrane segments spans residues 1 to 21, 31 to 51, 58 to 78, and 92 to 112; these read MGKLFLIGAGGFIGACLRYTV, IPAGTLTVNLLGTIVLAFLTF, MVYLVNIGILGSFTTFSTFAY, and FFLNIFLNVALCLVGVSIAYL. Na(+)-binding residues include glycine 68 and threonine 71.

The protein belongs to the fluoride channel Fluc/FEX (TC 1.A.43) family.

The protein resides in the cell membrane. The catalysed reaction is fluoride(in) = fluoride(out). Na(+) is not transported, but it plays an essential structural role and its presence is essential for fluoride channel function. Fluoride-specific ion channel. Important for reducing fluoride concentration in the cell, thus reducing its toxicity. This Methanosarcina barkeri (strain Fusaro / DSM 804) protein is Fluoride-specific ion channel FluC 1.